The chain runs to 342 residues: D-alanine--D-alanine ligase (342 aa).

Residues 132-326 (KLYAKECGIE…VAKHLPKSKN (195 aa)) enclose the ATP-grasp domain. ATP is bound at residue 159 to 210 (EYPVIIKPNHLGSSIGVSVVYDSSELEYALDVAFEFDDEVLIEPFIEGIEEY). Aspartate 282, glutamate 294, and asparagine 296 together coordinate Mg(2+).

This sequence belongs to the D-alanine--D-alanine ligase family. It depends on Mg(2+) as a cofactor. Mn(2+) serves as cofactor.

It is found in the cytoplasm. It carries out the reaction 2 D-alanine + ATP = D-alanyl-D-alanine + ADP + phosphate + H(+). It participates in cell wall biogenesis; peptidoglycan biosynthesis. In terms of biological role, cell wall formation. This Nitratiruptor sp. (strain SB155-2) protein is D-alanine--D-alanine ligase.